The following is a 412-amino-acid chain: Transforming growth factor beta-3 proprotein (412 aa).

The signal sequence occupies residues 1-23; sequence MKMHLQRALVVLALLNFATVSLS. N-linked (GlcNAc...) asparagine glycosylation is found at asparagine 74, asparagine 135, and asparagine 142. A Cell attachment site motif is present at residues 261-263; that stretch reads RGD. At glutamine 293 the chain carries N5-methylglutamine. Intrachain disulfides connect cysteine 307–cysteine 316, cysteine 315–cysteine 378, cysteine 344–cysteine 409, and cysteine 348–cysteine 411.

This sequence belongs to the TGF-beta family. As to quaternary structure, interacts with ASPN. Latency-associated peptide: Homodimer; disulfide-linked. Latency-associated peptide: Interacts with Transforming growth factor beta-3 (TGF-beta-3) chain; interaction is non-covalent and maintains (TGF-beta-3) in a latent state. Latency-associated peptide: Interacts with LRRC32/GARP; leading to regulate activation of TGF-beta-3 and promote epithelial fusion during palate development. Latency-associated peptide: Interacts (via cell attachment site) with integrins, leading to release of the active TGF-beta-3. Transforming growth factor beta-3: Homodimer; disulfide-linked. Transforming growth factor beta-3: Interacts with TGF-beta receptors (TGFBR1 and TGFBR2), leading to signal transduction. Transforming growth factor beta-3 proprotein: The precursor proprotein is cleaved in the Golgi apparatus to form Transforming growth factor beta-3 (TGF-beta-3) and Latency-associated peptide (LAP) chains, which remain non-covalently linked, rendering TGF-beta-3 inactive. Post-translationally, methylated at Gln-293 by N6AMT1.

The protein resides in the secreted. It is found in the extracellular space. It localises to the extracellular matrix. Functionally, transforming growth factor beta-3 proprotein: Precursor of the Latency-associated peptide (LAP) and Transforming growth factor beta-3 (TGF-beta-3) chains, which constitute the regulatory and active subunit of TGF-beta-3, respectively. Required to maintain the Transforming growth factor beta-3 (TGF-beta-3) chain in a latent state during storage in extracellular matrix. Associates non-covalently with TGF-beta-3 and regulates its activation via interaction with 'milieu molecules', such as LTBP1 and LRRC32/GARP, that control activation of TGF-beta-3. Interaction with integrins results in distortion of the Latency-associated peptide chain and subsequent release of the active TGF-beta-3. In terms of biological role, transforming growth factor beta-3: Multifunctional protein that regulates embryogenesis and cell differentiation and is required in various processes such as secondary palate development. Activation into mature form follows different steps: following cleavage of the proprotein in the Golgi apparatus, Latency-associated peptide (LAP) and Transforming growth factor beta-3 (TGF-beta-3) chains remain non-covalently linked rendering TGF-beta-3 inactive during storage in extracellular matrix. At the same time, LAP chain interacts with 'milieu molecules', such as LTBP1 and LRRC32/GARP that control activation of TGF-beta-3 and maintain it in a latent state during storage in extracellular milieus. TGF-beta-3 is released from LAP by integrins: integrin-binding results in distortion of the LAP chain and subsequent release of the active TGF-beta-3. Once activated following release of LAP, TGF-beta-3 acts by binding to TGF-beta receptors (TGFBR1 and TGFBR2), which transduce signal. This Homo sapiens (Human) protein is Transforming growth factor beta-3 proprotein (TGFB3).